Reading from the N-terminus, the 494-residue chain is Probable cytosol aminopeptidase (494 aa).

K260 and D265 together coordinate Mn(2+). K272 is an active-site residue. Mn(2+)-binding residues include D283, D342, and E344. The active site involves R346.

Belongs to the peptidase M17 family. Requires Mn(2+) as cofactor.

The protein localises to the cytoplasm. It carries out the reaction Release of an N-terminal amino acid, Xaa-|-Yaa-, in which Xaa is preferably Leu, but may be other amino acids including Pro although not Arg or Lys, and Yaa may be Pro. Amino acid amides and methyl esters are also readily hydrolyzed, but rates on arylamides are exceedingly low.. It catalyses the reaction Release of an N-terminal amino acid, preferentially leucine, but not glutamic or aspartic acids.. Its function is as follows. Presumably involved in the processing and regular turnover of intracellular proteins. Catalyzes the removal of unsubstituted N-terminal amino acids from various peptides. The polypeptide is Probable cytosol aminopeptidase (Bacillus cereus (strain AH187)).